The chain runs to 486 residues: UDP-N-acetylmuramoyl-L-alanyl-D-glutamate--2,6-diaminopimelate ligase (486 aa).

Ser34 is a UDP-N-acetyl-alpha-D-muramoyl-L-alanyl-D-glutamate binding site. 112-118 (GTAGKTS) is an ATP binding site. Residues 154 to 155 (TT), Ser181, Gln187, and Arg189 contribute to the UDP-N-acetyl-alpha-D-muramoyl-L-alanyl-D-glutamate site. An N6-carboxylysine modification is found at Lys221. Residues Arg385, 409–412 (DNPR), Gly457, and Glu461 each bind meso-2,6-diaminopimelate. Positions 409 to 412 (DNPR) match the Meso-diaminopimelate recognition motif motif.

The protein belongs to the MurCDEF family. MurE subfamily. The cofactor is Mg(2+). In terms of processing, carboxylation is probably crucial for Mg(2+) binding and, consequently, for the gamma-phosphate positioning of ATP.

The protein resides in the cytoplasm. The catalysed reaction is UDP-N-acetyl-alpha-D-muramoyl-L-alanyl-D-glutamate + meso-2,6-diaminopimelate + ATP = UDP-N-acetyl-alpha-D-muramoyl-L-alanyl-gamma-D-glutamyl-meso-2,6-diaminopimelate + ADP + phosphate + H(+). It functions in the pathway cell wall biogenesis; peptidoglycan biosynthesis. Catalyzes the addition of meso-diaminopimelic acid to the nucleotide precursor UDP-N-acetylmuramoyl-L-alanyl-D-glutamate (UMAG) in the biosynthesis of bacterial cell-wall peptidoglycan. The sequence is that of UDP-N-acetylmuramoyl-L-alanyl-D-glutamate--2,6-diaminopimelate ligase from Rhizobium meliloti (strain 1021) (Ensifer meliloti).